The sequence spans 112 residues: uncharacterized protein (112 aa).

This is an uncharacterized protein from Aquifex aeolicus (strain VF5).